We begin with the raw amino-acid sequence, 143 residues long: Nucleoside diphosphate kinase (143 aa).

Residues K11, F59, R87, T93, R104, and N114 each contribute to the ATP site. Catalysis depends on H117, which acts as the Pros-phosphohistidine intermediate.

This sequence belongs to the NDK family. As to quaternary structure, homotetramer. It depends on Mg(2+) as a cofactor.

It is found in the cytoplasm. The enzyme catalyses a 2'-deoxyribonucleoside 5'-diphosphate + ATP = a 2'-deoxyribonucleoside 5'-triphosphate + ADP. It catalyses the reaction a ribonucleoside 5'-diphosphate + ATP = a ribonucleoside 5'-triphosphate + ADP. Its function is as follows. Major role in the synthesis of nucleoside triphosphates other than ATP. The ATP gamma phosphate is transferred to the NDP beta phosphate via a ping-pong mechanism, using a phosphorylated active-site intermediate. The sequence is that of Nucleoside diphosphate kinase from Shewanella woodyi (strain ATCC 51908 / MS32).